Reading from the N-terminus, the 213-residue chain is ATP-dependent dethiobiotin synthetase BioD 2 (213 aa).

13-18 (DIGKTI) serves as a coordination point for ATP. Position 17 (threonine 17) interacts with Mg(2+). Lysine 38 is an active-site residue. Threonine 42 contributes to the substrate binding site. ATP contacts are provided by residues aspartate 50 and 115-118 (EGAG). Aspartate 50 and glutamate 115 together coordinate Mg(2+).

Belongs to the dethiobiotin synthetase family. As to quaternary structure, homodimer. The cofactor is Mg(2+).

The protein resides in the cytoplasm. It carries out the reaction (7R,8S)-7,8-diammoniononanoate + CO2 + ATP = (4R,5S)-dethiobiotin + ADP + phosphate + 3 H(+). The protein operates within cofactor biosynthesis; biotin biosynthesis; biotin from 7,8-diaminononanoate: step 1/2. Catalyzes a mechanistically unusual reaction, the ATP-dependent insertion of CO2 between the N7 and N8 nitrogen atoms of 7,8-diaminopelargonic acid (DAPA, also called 7,8-diammoniononanoate) to form a ureido ring. The chain is ATP-dependent dethiobiotin synthetase BioD 2 from Pasteurella multocida (strain Pm70).